A 265-amino-acid chain; its full sequence is Cytochrome c oxidase subunit 3 (265 aa).

6 consecutive transmembrane segments (helical) span residues 16–36, 40–60, 83–103, 159–179, 198–218, and 241–261; these read PWPF…ILWL, PSFL…FSWW, CVAL…WTFF, VGPF…FLVQ, VFYL…IWLM, and IWYW…VYVW.

This sequence belongs to the cytochrome c oxidase subunit 3 family. In terms of assembly, component of the cytochrome c oxidase (complex IV, CIV), a multisubunit enzyme composed of a catalytic core of 3 subunits and several supernumerary subunits. The complex exists as a monomer or a dimer and forms supercomplexes (SCs) in the inner mitochondrial membrane with ubiquinol-cytochrome c oxidoreductase (cytochrome b-c1 complex, complex III, CIII).

The protein resides in the mitochondrion inner membrane. The catalysed reaction is 4 Fe(II)-[cytochrome c] + O2 + 8 H(+)(in) = 4 Fe(III)-[cytochrome c] + 2 H2O + 4 H(+)(out). Component of the cytochrome c oxidase, the last enzyme in the mitochondrial electron transport chain which drives oxidative phosphorylation. The respiratory chain contains 3 multisubunit complexes succinate dehydrogenase (complex II, CII), ubiquinol-cytochrome c oxidoreductase (cytochrome b-c1 complex, complex III, CIII) and cytochrome c oxidase (complex IV, CIV), that cooperate to transfer electrons derived from NADH and succinate to molecular oxygen, creating an electrochemical gradient over the inner membrane that drives transmembrane transport and the ATP synthase. Cytochrome c oxidase is the component of the respiratory chain that catalyzes the reduction of oxygen to water. Electrons originating from reduced cytochrome c in the intermembrane space (IMS) are transferred via the dinuclear copper A center (CU(A)) of subunit 2 and heme A of subunit 1 to the active site in subunit 1, a binuclear center (BNC) formed by heme A3 and copper B (CU(B)). The BNC reduces molecular oxygen to 2 water molecules using 4 electrons from cytochrome c in the IMS and 4 protons from the mitochondrial matrix. The chain is Cytochrome c oxidase subunit 3 (COIII) from Mytilus edulis (Blue mussel).